Consider the following 162-residue polypeptide: Small ribosomal subunit protein uS13 (162 aa).

Residues 142 to 162 (RGQRTKSTGRRGSTVGVSRKK) form a disordered region.

This sequence belongs to the universal ribosomal protein uS13 family. Part of the 30S ribosomal subunit. Forms a loose heterodimer with protein S19. Forms two bridges to the 50S subunit in the 70S ribosome.

In terms of biological role, located at the top of the head of the 30S subunit, it contacts several helices of the 16S rRNA. In the 70S ribosome it contacts the 23S rRNA (bridge B1a) and protein L5 of the 50S subunit (bridge B1b), connecting the 2 subunits; these bridges are implicated in subunit movement. The chain is Small ribosomal subunit protein uS13 from Methanosarcina mazei (strain ATCC BAA-159 / DSM 3647 / Goe1 / Go1 / JCM 11833 / OCM 88) (Methanosarcina frisia).